The primary structure comprises 155 residues: Transcriptional repressor NrdR (155 aa).

The interval 1 to 22 is disordered; that stretch reads MRCPFCGHDETQVKDSRPSEDG. Residues 3–34 fold into a zinc finger; it reads CPFCGHDETQVKDSRPSEDGAAIRRRRLCPQC. A compositionally biased stretch (basic and acidic residues) spans 7 to 22; it reads GHDETQVKDSRPSEDG. Positions 49–139 constitute an ATP-cone domain; it reads ITILKRSGRR…VYRDFRETQD (91 aa).

Belongs to the NrdR family. Requires Zn(2+) as cofactor.

In terms of biological role, negatively regulates transcription of bacterial ribonucleotide reductase nrd genes and operons by binding to NrdR-boxes. The chain is Transcriptional repressor NrdR from Phenylobacterium zucineum (strain HLK1).